The following is a 233-amino-acid chain: MKKAVVLLSGGLDSTTCMSVAHKAGYELYPLSFDYGQRHQRELEAAKAVAQYYKVKEHRLIKIEHVGGSALTDASIQVPDYTEDGQIPVTYVPARNILFLSYALGYGEVIGAEAIFIGISSVDYSGYPDCRPEFLQAFQKVVDVGTKAGVSGQTIAIKAPLLYLSKGETIQLAAENGAPLHHTTSCYRGGEKACGTCDSCTLRLKGFAEAGIKDPIDYVNQGDRSCFSTPLED.

8 to 18 (LSGGLDSTTCM) is a binding site for ATP. The Zn(2+) site is built by C186, C194, C197, and C200.

Belongs to the QueC family. As to quaternary structure, homodimer. Zn(2+) serves as cofactor.

It catalyses the reaction 7-carboxy-7-deazaguanine + NH4(+) + ATP = 7-cyano-7-deazaguanine + ADP + phosphate + H2O + H(+). Its pathway is purine metabolism; 7-cyano-7-deazaguanine biosynthesis. Catalyzes the ATP-dependent conversion of 7-carboxy-7-deazaguanine (CDG) to 7-cyano-7-deazaguanine (preQ(0)). The sequence is that of 7-cyano-7-deazaguanine synthase from Desulfitobacterium hafniense (strain DSM 10664 / DCB-2).